A 205-amino-acid polypeptide reads, in one-letter code: MNPNMNMMQMSGPPMMQVSPMMQSSPQPMMPTGPPGPVPMQQQHQQQQQQQQQQQQQQQQQAEKLDNISRVKSLLGPLRESMFLTIRSSAFTLQQNNLADNLKRDTGGHGHVPRFDKHLEDFYACCDQMELHLKTAIQCMQQLTSSQHYLPGAVTAMRMENFMQDNPAGPIPYPTYLNTVRVHVQSAKDIHDTLISAAQNISQAD.

The span at 1 to 27 (MNPNMNMMQMSGPPMMQVSPMMQSSPQ) shows a compositional bias: low complexity. Residues 1 to 65 (MNPNMNMMQM…QQQQQQAEKL (65 aa)) are disordered. The segment covering 28–38 (PMMPTGPPGPV) has biased composition (pro residues). Low complexity predominate over residues 39-61 (PMQQQHQQQQQQQQQQQQQQQQQ).

The protein belongs to the Mediator complex subunit 29 family. As to quaternary structure, component of the Mediator complex.

It is found in the nucleus. Functionally, component of the Mediator complex, a coactivator involved in the regulated transcription of nearly all RNA polymerase II-dependent genes. Mediator functions as a bridge to convey information from gene-specific regulatory proteins to the basal RNA polymerase II transcription machinery. Mediator is recruited to promoters by direct interactions with regulatory proteins and serves as a scaffold for the assembly of a functional preinitiation complex with RNA polymerase II and the general transcription factors. The polypeptide is Mediator of RNA polymerase II transcription subunit 29 (ix) (Drosophila virilis (Fruit fly)).